The primary structure comprises 273 residues: Transposable element Tcb2 transposase (273 aa).

Belongs to the transposase 5 family.

The protein resides in the nucleus. In terms of biological role, probably essential for transposable element Tcb2 transposition. The chain is Transposable element Tcb2 transposase from Caenorhabditis briggsae.